The sequence spans 55 residues: Small ribosomal subunit protein eS31 (55 aa).

Zn(2+) contacts are provided by cysteine 21, cysteine 24, cysteine 39, and cysteine 42. A C4-type zinc finger spans residues 21–42 (CPRCGPGVFLAEHADRFTCGRC).

Belongs to the eukaryotic ribosomal protein eS31 family. In terms of assembly, part of the 30S ribosomal subunit. Requires Zn(2+) as cofactor.

The chain is Small ribosomal subunit protein eS31 from Thermoplasma volcanium (strain ATCC 51530 / DSM 4299 / JCM 9571 / NBRC 15438 / GSS1).